The chain runs to 565 residues: Anaphase-promoting complex subunit 7 (565 aa).

10 TPR repeats span residues 101 to 134, 169 to 202, 203 to 236, 237 to 270, 339 to 372, 373 to 406, 407 to 439, 442 to 474, 475 to 508, and 509 to 531; these read EIEV…RQRT, LDAI…LDWL, SVWI…LRDN, VDLL…DPYL, VQAL…APCR, LDCY…LGAN, AQTL…AQRP, VKAV…NQSD, CVLH…DPND, and QKSL…TQEE. Lys229 carries the N6-acetyllysine modification. Residues 513–523 are compositionally biased toward basic and acidic residues; sequence EGMQKMEKEES. Residues 513 to 565 are disordered; it reads EGMQKMEKEESPTDATQEEDVDDMEGSGEEGDLEGSDSEAAQWADQEQWFGMQ. Positions 528 to 549 are enriched in acidic residues; that stretch reads TQEEDVDDMEGSGEEGDLEGSD.

The protein belongs to the APC7 family. V-shaped homodimer. The mammalian APC/C is composed at least of 14 distinct subunits ANAPC1, ANAPC2, CDC27/APC3, ANAPC4, ANAPC5, CDC16/APC6, ANAPC7, CDC23/APC8, ANAPC10, ANAPC11, CDC26/APC12, ANAPC13, ANAPC15 and ANAPC16 that assemble into a complex of at least 19 chains with a combined molecular mass of around 1.2 MDa; APC/C interacts with FZR1 and FBXO5.

The protein localises to the cytoplasm. It localises to the cytoskeleton. It is found in the nucleus. Its subcellular location is the spindle. It functions in the pathway protein modification; protein ubiquitination. In terms of biological role, component of the anaphase promoting complex/cyclosome (APC/C), a cell cycle-regulated E3 ubiquitin ligase that controls progression through mitosis and the G1 phase of the cell cycle. The APC/C complex acts by mediating ubiquitination and subsequent degradation of target proteins: it mainly mediates the formation of 'Lys-11'-linked polyubiquitin chains and, to a lower extent, the formation of 'Lys-48'- and 'Lys-63'-linked polyubiquitin chains. The APC/C complex catalyzes assembly of branched 'Lys-11'-/'Lys-48'-linked branched ubiquitin chains on target proteins. APC7 is not required for the assembly of the APC/C complex, but has an enzyme-substrate adapter activity mediating the processive ubiquitination of specific substrates. Involved in brain development through the specific ubiquitination and clearance of MKI67 from constitutive heterochromatin after neuronal progenitors exit mitosis. The chain is Anaphase-promoting complex subunit 7 (Anapc7) from Mus musculus (Mouse).